The chain runs to 180 residues: Ribulose bisphosphate carboxylase small subunit, chloroplastic 2 (180 aa).

The transit peptide at Met1 to Ser56 directs the protein to the chloroplast.

This sequence belongs to the RuBisCO small chain family. As to quaternary structure, heterohexadecamer of 8 large and 8 small subunits. In terms of assembly, (Microbial infection) Binds to tobamovirus movement protein; this interaction seems required for viral systemic movement.

It localises to the plastid. It is found in the chloroplast. Its subcellular location is the cell junction. The protein resides in the plasmodesma. RuBisCO catalyzes two reactions: the carboxylation of D-ribulose 1,5-bisphosphate, the primary event in carbon dioxide fixation, as well as the oxidative fragmentation of the pentose substrate. Both reactions occur simultaneously and in competition at the same active site. Although the small subunit is not catalytic it is essential for maximal activity. Involved in antiviral defenses. The chain is Ribulose bisphosphate carboxylase small subunit, chloroplastic 2 from Solanum lycopersicum (Tomato).